Here is a 521-residue protein sequence, read N- to C-terminus: Bifunctional purine biosynthesis protein PurH (521 aa).

The region spanning 1-145 (MIKQALISVS…KNHRDVTVVV (145 aa)) is the MGS-like domain.

This sequence belongs to the PurH family.

The enzyme catalyses (6R)-10-formyltetrahydrofolate + 5-amino-1-(5-phospho-beta-D-ribosyl)imidazole-4-carboxamide = 5-formamido-1-(5-phospho-D-ribosyl)imidazole-4-carboxamide + (6S)-5,6,7,8-tetrahydrofolate. It carries out the reaction IMP + H2O = 5-formamido-1-(5-phospho-D-ribosyl)imidazole-4-carboxamide. Its pathway is purine metabolism; IMP biosynthesis via de novo pathway; 5-formamido-1-(5-phospho-D-ribosyl)imidazole-4-carboxamide from 5-amino-1-(5-phospho-D-ribosyl)imidazole-4-carboxamide (10-formyl THF route): step 1/1. It participates in purine metabolism; IMP biosynthesis via de novo pathway; IMP from 5-formamido-1-(5-phospho-D-ribosyl)imidazole-4-carboxamide: step 1/1. The chain is Bifunctional purine biosynthesis protein PurH from Paraburkholderia phytofirmans (strain DSM 17436 / LMG 22146 / PsJN) (Burkholderia phytofirmans).